Here is a 348-residue protein sequence, read N- to C-terminus: UPF0283 membrane protein PMI1371 (348 aa).

2 helical membrane passes run 69–89 (LITV…GQWI) and 99–119 (IALG…GSVI).

Belongs to the UPF0283 family.

The protein resides in the cell inner membrane. The protein is UPF0283 membrane protein PMI1371 of Proteus mirabilis (strain HI4320).